The sequence spans 105 residues: MSKIHVRKKDTVVVISGKDKSKIGEVLSVLPKKGKVIVKDVNVVTKHQKPNRENMQGGIIHKEAPIFSSKVMLYCDKCKSATRISNKILEDGTKVRVCKKCGETF.

The protein belongs to the universal ribosomal protein uL24 family. As to quaternary structure, part of the 50S ribosomal subunit.

Functionally, one of two assembly initiator proteins, it binds directly to the 5'-end of the 23S rRNA, where it nucleates assembly of the 50S subunit. Its function is as follows. One of the proteins that surrounds the polypeptide exit tunnel on the outside of the subunit. The polypeptide is Large ribosomal subunit protein uL24 (Clostridium botulinum (strain ATCC 19397 / Type A)).